The primary structure comprises 323 residues: ADP-L-glycero-D-manno-heptose-6-epimerase (323 aa).

Residues 10 to 11 (FI), 31 to 32 (DN), Lys38, Arg53, 75 to 79 (MGACS), and Asn92 each bind NADP(+). Tyr143 functions as the Proton acceptor in the catalytic mechanism. Lys147 serves as a coordination point for NADP(+). Substrate is bound at residue Asn170. Positions 171 and 179 each coordinate NADP(+). Lys179 functions as the Proton acceptor in the catalytic mechanism. Substrate is bound by residues Asp181, Lys188, 202 to 205 (FRSC), Arg216, and Tyr281.

It belongs to the NAD(P)-dependent epimerase/dehydratase family. HldD subfamily. Homopentamer. NADP(+) serves as cofactor.

The catalysed reaction is ADP-D-glycero-beta-D-manno-heptose = ADP-L-glycero-beta-D-manno-heptose. The protein operates within nucleotide-sugar biosynthesis; ADP-L-glycero-beta-D-manno-heptose biosynthesis; ADP-L-glycero-beta-D-manno-heptose from D-glycero-beta-D-manno-heptose 7-phosphate: step 4/4. Functionally, catalyzes the interconversion between ADP-D-glycero-beta-D-manno-heptose and ADP-L-glycero-beta-D-manno-heptose via an epimerization at carbon 6 of the heptose. This is ADP-L-glycero-D-manno-heptose-6-epimerase from Nitratidesulfovibrio vulgaris (strain ATCC 29579 / DSM 644 / CCUG 34227 / NCIMB 8303 / VKM B-1760 / Hildenborough) (Desulfovibrio vulgaris).